The primary structure comprises 128 residues: Small ribosomal subunit protein eS8 (128 aa).

This sequence belongs to the eukaryotic ribosomal protein eS8 family. Part of the 30S ribosomal subunit.

The polypeptide is Small ribosomal subunit protein eS8 (Methanococcus aeolicus (strain ATCC BAA-1280 / DSM 17508 / OCM 812 / Nankai-3)).